Reading from the N-terminus, the 407-residue chain is Peptidase T (407 aa).

His78 serves as a coordination point for Zn(2+). Asp80 is an active-site residue. Asp139 contacts Zn(2+). Residue Glu173 is the Proton acceptor of the active site. Positions 174, 196, and 378 each coordinate Zn(2+).

The protein belongs to the peptidase M20B family. Zn(2+) serves as cofactor.

Its subcellular location is the cytoplasm. The catalysed reaction is Release of the N-terminal residue from a tripeptide.. Its function is as follows. Cleaves the N-terminal amino acid of tripeptides. In Macrococcus caseolyticus (strain JCSC5402) (Macrococcoides caseolyticum), this protein is Peptidase T.